The chain runs to 38 residues: Defensin (38 aa).

3 disulfide bridges follow: C4–C26, C11–C34, and C15–C36.

It belongs to the invertebrate defensin family. Type 2 subfamily.

It localises to the secreted. Mediates the inducible antibacterial activity in larvae of A.cyanea. This chain is Defensin, found in Aeshna cyanea (Southern hawker dragonfly).